A 57-amino-acid polypeptide reads, in one-letter code: Bowman-Birk type proteinase inhibitor B4 (57 aa).

4 disulfides stabilise this stretch: Cys-6–Cys-55, Cys-12–Cys-17, Cys-26–Cys-33, and Cys-30–Cys-47.

This sequence belongs to the Bowman-Birk serine protease inhibitor family. As to expression, expressed in bulb (at protein level).

Serine protease inhibitor. Inhibits trypsin (Ki = 110 nM) and very weakly inhibits chymotrypsin (Ki =1200 nM). Does not inhibit bacterial subtilisin. In Hyacinthus orientalis (Common hyacinth), this protein is Bowman-Birk type proteinase inhibitor B4.